A 185-amino-acid chain; its full sequence is Ribosome-recycling factor (185 aa).

Positions A135–K159 are disordered.

It belongs to the RRF family.

It localises to the cytoplasm. Functionally, responsible for the release of ribosomes from messenger RNA at the termination of protein biosynthesis. May increase the efficiency of translation by recycling ribosomes from one round of translation to another. The sequence is that of Ribosome-recycling factor from Moorella thermoacetica (strain ATCC 39073 / JCM 9320).